Here is a 235-residue protein sequence, read N- to C-terminus: Ubiquinone/menaquinone biosynthesis C-methyltransferase UbiE (235 aa).

Positions 59, 84, and 123 each coordinate S-adenosyl-L-methionine.

It belongs to the class I-like SAM-binding methyltransferase superfamily. MenG/UbiE family.

The enzyme catalyses a 2-demethylmenaquinol + S-adenosyl-L-methionine = a menaquinol + S-adenosyl-L-homocysteine + H(+). The catalysed reaction is a 2-methoxy-6-(all-trans-polyprenyl)benzene-1,4-diol + S-adenosyl-L-methionine = a 5-methoxy-2-methyl-3-(all-trans-polyprenyl)benzene-1,4-diol + S-adenosyl-L-homocysteine + H(+). It functions in the pathway quinol/quinone metabolism; menaquinone biosynthesis; menaquinol from 1,4-dihydroxy-2-naphthoate: step 2/2. Its pathway is cofactor biosynthesis; ubiquinone biosynthesis. In terms of biological role, methyltransferase required for the conversion of demethylmenaquinol (DMKH2) to menaquinol (MKH2) and the conversion of 2-polyprenyl-6-methoxy-1,4-benzoquinol (DDMQH2) to 2-polyprenyl-3-methyl-6-methoxy-1,4-benzoquinol (DMQH2). The polypeptide is Ubiquinone/menaquinone biosynthesis C-methyltransferase UbiE (Campylobacter jejuni subsp. jejuni serotype O:2 (strain ATCC 700819 / NCTC 11168)).